A 24-amino-acid polypeptide reads, in one-letter code: Arginine attenuator peptide (24 aa).

Belongs to the arginine attenuator peptide family.

Arginine attenuator peptide (AAP) that has a regulatory role in the production of arginine-specific carbamoyl phosphate synthetase. Encoded by an upstream open reading frame (uORF) within the 5'-leader region of arginine-specific carbamoyl phosphate synthetase small chain (arg-2) mRNA, it attenuates the translation of the downstream arg-2 ORF. In the presence of high concentrations of arginine, ribosomes translating the uORF encoding AAP stall at the termination codon, resulting in reduced translation from the downstream arg-2 initiation codon. The protein is Arginine attenuator peptide of Neurospora crassa (strain ATCC 24698 / 74-OR23-1A / CBS 708.71 / DSM 1257 / FGSC 987).